Reading from the N-terminus, the 395-residue chain is Tubulin-like protein CetZ1 (395 aa).

GTP contacts are provided by residues 10–14, 110–112, Glu142, Asn169, and Asn187; these read QAGGK and GTG.

The protein belongs to the CetZ family.

It localises to the cytoplasm. Involved in cell shape control. Essential for the development of a rod-shaped cell type required for efficient swimming. The polypeptide is Tubulin-like protein CetZ1 (Haloferax volcanii (strain ATCC 29605 / DSM 3757 / JCM 8879 / NBRC 14742 / NCIMB 2012 / VKM B-1768 / DS2) (Halobacterium volcanii)).